The primary structure comprises 354 residues: Biotin synthase (354 aa).

The 228-residue stretch at 41–268 (NEVQISRLLS…LSRVRLSAGR (228 aa)) folds into the Radical SAM core domain. Positions 56, 60, and 63 each coordinate [4Fe-4S] cluster. 4 residues coordinate [2Fe-2S] cluster: Cys100, Cys131, Cys191, and Arg263.

It belongs to the radical SAM superfamily. Biotin synthase family. As to quaternary structure, homodimer. [4Fe-4S] cluster serves as cofactor. It depends on [2Fe-2S] cluster as a cofactor.

The enzyme catalyses (4R,5S)-dethiobiotin + (sulfur carrier)-SH + 2 reduced [2Fe-2S]-[ferredoxin] + 2 S-adenosyl-L-methionine = (sulfur carrier)-H + biotin + 2 5'-deoxyadenosine + 2 L-methionine + 2 oxidized [2Fe-2S]-[ferredoxin]. Its pathway is cofactor biosynthesis; biotin biosynthesis; biotin from 7,8-diaminononanoate: step 2/2. Catalyzes the conversion of dethiobiotin (DTB) to biotin by the insertion of a sulfur atom into dethiobiotin via a radical-based mechanism. The sequence is that of Biotin synthase from Shewanella amazonensis (strain ATCC BAA-1098 / SB2B).